A 186-amino-acid chain; its full sequence is Astacin-like metalloprotease toxin 5 (186 aa).

The 186-residue stretch at 1-186 folds into the Peptidase M12A domain; the sequence is NAVKYDQQLW…CHSKRKAELL (186 aa). Intrachain disulfides connect Cys-42/Cys-177 and Cys-63/Cys-84. Position 92 (His-92) interacts with Zn(2+). Glu-93 is an active-site residue. His-96 and His-102 together coordinate Zn(2+). The N-linked (GlcNAc...) asparagine glycan is linked to Asn-122.

In terms of assembly, monomer. Zn(2+) is required as a cofactor. Expressed by the venom gland.

The protein resides in the secreted. With respect to regulation, inhibited by 1,10-phenanthroline. Functionally, zinc metalloprotease. Provoques deadhesion of endothelial cells from cell cultures, and also degradation of fibronectin, fibrinogen and gelatin in vitro. Its role in the venom is not fully understood but it might act as a spreading factor that facilitates diffusion of other venom toxins. Alternatively, it might be involved in the proteolytic processing of other venom toxins or it might play a role in extra-oral digestion of prey. The polypeptide is Astacin-like metalloprotease toxin 5 (Loxosceles gaucho (Spider)).